The chain runs to 107 residues: Magnetosome protein MmsF (107 aa).

The Cytoplasmic portion of the chain corresponds to 1 to 13; sequence MTEAILRSTLGAR. The helical transmembrane segment at 14–34 threads the bilayer; the sequence is TTVMAALSYLSVLCFVPLLVD. Topologically, residues 35 to 46 are lumenal; it reads RDDEFVYFHAKQ. Residues 47–67 traverse the membrane as a helical segment; sequence GLVIWMWGVLALFALHVPVLG. The Cytoplasmic segment spans residues 68–69; that stretch reads KW. A helical membrane pass occupies residues 70–90; sequence IFGFSSMGVLVFSLLGLVSVV. The Lumenal portion of the chain corresponds to 91-107; the sequence is FQRAWKLPLISWVAHRI.

It belongs to the magnetosome MamF/MmsF protein family. In terms of assembly, may oligomerize.

The protein localises to the magnetosome membrane. Its function may be negatively regulated by one of the MamGFDC proteins. In terms of biological role, plays a major role in synthesis of cubooctahedral magnetite crystals by controlling crystal growth and morphology after nucleation. Has a partially redundant function with MamF. When overexpressed in E.coli the soluble protein self assembles into shells of about 36 nm. This protein mediates the formation of magnetite nanoparticles from a solution of Fe(2+) and Fe(3+) sulfate; the crystals are larger and lack alternative iron oxide/oxyhydroxide species seen in the protein's absence. The polypeptide is Magnetosome protein MmsF (Paramagnetospirillum magneticum (strain ATCC 700264 / AMB-1) (Magnetospirillum magneticum)).